The primary structure comprises 309 residues: MFSPADNIFIILITGEFILGILGNGYIALVNWIDWIKKKKISTTDYILTNLVISRICLISVIVVNGIVTVLYPDVYTKSKLQIAISTFWTFANYLNMWFTTCLNVFYFLKIANSSHPLFLWLKQKIDMVVRWILLGCFAISLLVSLIIAIVLSRDYRFHAIAKHKRNITEMFHVSKMLYFEPLTLFNLLAIVPFIVSLMSFFLLVRSLQRHTKQIKLYATGGRDPSTEAHVRAIKTMTSFIFFFFLYYITSLLVTFSYLMTKYKLAMAFGEIVAILYPSGHSFILIILNNKLRQASVRMLTCIKITCVI.

The Extracellular portion of the chain corresponds to 1-7; it reads MFSPADN. Residues 8–28 traverse the membrane as a helical segment; the sequence is IFIILITGEFILGILGNGYIA. At 29 to 50 the chain is on the cytoplasmic side; that stretch reads LVNWIDWIKKKKISTTDYILTN. Residues 51-71 traverse the membrane as a helical segment; that stretch reads LVISRICLISVIVVNGIVTVL. At 72–82 the chain is on the extracellular side; sequence YPDVYTKSKLQ. Residues 83–103 form a helical membrane-spanning segment; the sequence is IAISTFWTFANYLNMWFTTCL. Residues 104–131 are Cytoplasmic-facing; it reads NVFYFLKIANSSHPLFLWLKQKIDMVVR. Residues 132-152 traverse the membrane as a helical segment; that stretch reads WILLGCFAISLLVSLIIAIVL. The Extracellular segment spans residues 153-184; that stretch reads SRDYRFHAIAKHKRNITEMFHVSKMLYFEPLT. N-linked (GlcNAc...) asparagine glycosylation occurs at Asn167. A helical transmembrane segment spans residues 185–205; that stretch reads LFNLLAIVPFIVSLMSFFLLV. Over 206-239 the chain is Cytoplasmic; sequence RSLQRHTKQIKLYATGGRDPSTEAHVRAIKTMTS. The helical transmembrane segment at 240 to 260 threads the bilayer; the sequence is FIFFFFLYYITSLLVTFSYLM. The Extracellular portion of the chain corresponds to 261 to 266; that stretch reads TKYKLA. A helical membrane pass occupies residues 267 to 287; it reads MAFGEIVAILYPSGHSFILII. Residues 288–309 lie on the Cytoplasmic side of the membrane; that stretch reads LNNKLRQASVRMLTCIKITCVI.

This sequence belongs to the G-protein coupled receptor T2R family.

The protein localises to the membrane. Functionally, receptor that may play a role in the perception of bitterness and is gustducin-linked. May play a role in sensing the chemical composition of the gastrointestinal content. The activity of this receptor may stimulate alpha gustducin, mediate PLC-beta-2 activation and lead to the gating of TRPM5. The protein is Taste receptor type 2 member 8 (TAS2R8) of Pongo pygmaeus (Bornean orangutan).